Here is a 3375-residue protein sequence, read N- to C-terminus: Basement membrane proteoglycan (3375 aa).

A signal peptide spans 1-22 (MKRSSTVLAALLALLLVATNDA). Residues 45 to 130 (VQITVFPSEK…NTVEARATLS (86 aa)) form the Ig-like C2-type 1 domain. Disulfide bonds link Cys-66-Cys-114, Cys-149-Cys-161, Cys-156-Cys-174, Cys-168-Cys-183, Cys-190-Cys-202, Cys-197-Cys-215, Cys-209-Cys-224, Cys-233-Cys-246, Cys-240-Cys-259, Cys-253-Cys-268, and Cys-293-Cys-344. 3 LDL-receptor class A domains span residues 148 to 184 (QCMA…ANCP), 189 to 225 (TCEP…LNCN), and 232 to 269 (DCKP…VGCV). In terms of domain architecture, Ig-like C2-type 2 spans 271-355 (PTVVDPPQTN…AINVKGRVLA (85 aa)). The disordered stretch occupies residues 364–385 (VDDPRPQPPQPPTAPPQRASCD). Pro residues predominate over residues 369 to 378 (PQPPQPPTAP). 3 disulfides stabilise this stretch: Cys-384-Cys-400, Cys-402-Cys-411, and Cys-414-Cys-429. A Laminin EGF-like 1; truncated domain is found at 384–431 (CDTRGAVTPYPNNYGTCECKSQVTGPNCDQCKPGAFHLSEKSPEGCLK). One can recognise a Laminin EGF-like 2; first part domain in the interval 432–441 (CFCFGVSNDC). Positions 450-633 (KDRLMFAGDA…PDGLALEVEQ (184 aa)) constitute a Laminin IV type A 1 domain. Intrachain disulfides connect Cys-634-Cys-648, Cys-636-Cys-689, Cys-691-Cys-700, and Cys-703-Cys-718. The Laminin EGF-like 2; second part domain occupies 634–666 (CVCPPGYLGTSCEDCAPGYERSGYGPYLGTCVP). A Laminin EGF-like 3; truncated domain is found at 674–720 (CGPGAVAPTAPAQGQCQCKASVIGPNCDRCAPNSFGLAPTNPQGCIP). The 10-residue stretch at 721 to 730 (CFCSGVTQQC) folds into the Laminin EGF-like 4; first part domain. In terms of domain architecture, Laminin IV type A 2 spans 740 to 921 (VSIDYARGDR…QGLTAAEVEQ (182 aa)). Positions 922–954 (CICPPGYVGTSCEDCAPGYSRTGGGLYLGLCEK) constitute a Laminin EGF-like 4; second part domain. Intrachain disulfides connect Cys-955–Cys-964, Cys-957–Cys-971, Cys-974–Cys-983, Cys-986–Cys-1002, Cys-1011–Cys-1021, Cys-1013–Cys-1027, Cys-1030–Cys-1039, Cys-1042–Cys-1058, Cys-1061–Cys-1069, Cys-1063–Cys-1079, Cys-1082–Cys-1091, Cys-1094–Cys-1109, Cys-1152–Cys-1200, Cys-1247–Cys-1294, and Cys-1338–Cys-1384. Laminin EGF-like domains lie at 955–1004 (CECN…DCQP), 1011–1060 (CHCN…DCTP), and 1061–1111 (CPCP…VCEP). 15 consecutive Ig-like C2-type domains span residues 1126–1222 (PHEV…KRIS), 1226–1311 (PQPV…AVLE), 1319–1401 (PKVD…EPVQ), 1410–1499 (PQRG…ARLN), 1503–1585 (PQAI…RPVE), 1588–1680 (PARV…TPAT), 1690–1785 (PQVE…STLN), 1793–1878 (PRPV…VRLE), 1886–1970 (PTAV…GNVN), 1973–2069 (PSLT…IYIE), 2073–2163 (PSRI…AVHV), 2173–2260 (PKVE…TAVS), 2263–2343 (QQDK…GFVT), 2349–2435 (PDTI…RTVL), and 2446–2530 (TFTV…VDLQ). Polar residues predominate over residues 1388–1400 (DPSDNTPLQSEPV). Disordered regions lie at residues 1388–1426 (DPSD…QTVN) and 1478–1497 (EYEC…PPAR). Residue Asn-1422 is glycosylated (N-linked (GlcNAc...) asparagine). Cystine bridges form between Cys-1435–Cys-1481, Cys-1527–Cys-1573, Cys-1618–Cys-1663, and Cys-1719–Cys-1767. Residues 1481 to 1497 (CTSTEPDGSTQLSPPAR) show a composition bias toward polar residues. A disordered region spans residues 1773-1792 (NSPPVKTNPSTLNVTPEGTP). Positions 1776 to 1788 (PVKTNPSTLNVTP) are enriched in polar residues. Intrachain disulfides connect Cys-1814–Cys-1861, Cys-1907–Cys-1954, Cys-1998–Cys-2053, Cys-2099–Cys-2147, Cys-2195–Cys-2242, Cys-2284–Cys-2329, Cys-2374–Cys-2420, Cys-2467–Cys-2514, Cys-2713–Cys-2725, Cys-2719–Cys-2736, Cys-2738–Cys-2747, Cys-2754–Cys-2764, Cys-2759–Cys-2773, Cys-2775–Cys-2784, and Cys-2935–Cys-2960. The interval 1880–1918 (TEDQEPPTAVVEPRTWNGKPGERHQFRCITTGSPTPKIT) is disordered. The span at 1907-1918 (CITTGSPTPKIT) shows a compositional bias: polar residues. An N-linked (GlcNAc...) asparagine glycan is attached at Asn-2476. The Laminin G-like 1 domain maps to 2532–2713 (DDFIPVIDGE…PSSVVKYDAC (182 aa)). One can recognise a Laminin G-like 2 domain in the interval 2793–2960 (PLGFTSDTSF…LSSSGDISSC (168 aa)). Asn-2950 carries an N-linked (GlcNAc...) asparagine glycan. Low complexity predominate over residues 2952 to 2963 (SSSGDISSCEES). The segment at 2952 to 3124 (SSSGDISSCE…GTLPPDSSSE (173 aa)) is disordered. Acidic residues-rich tracts occupy residues 2979–2990 (EEPEAVIEEPTT) and 2999–3010 (PITEEPTEEPTT). The segment covering 3011–3033 (TEEPTTTEEPTTTTEEPTTTTTE) has biased composition (low complexity). A compositionally biased stretch (basic and acidic residues) spans 3034 to 3044 (EPYHIYETSRD). Positions 3049-3079 (IIIPVETTTTSTTTTSTTEEPEAEPALVLPT) are enriched in low complexity. Positions 3081 to 3094 (PVEENDVSDEEEEI) are enriched in acidic residues. Intrachain disulfides connect Cys-3141/Cys-3152, Cys-3146/Cys-3162, Cys-3164/Cys-3173, and Cys-3333/Cys-3359. Residues Asn-3143 and Asn-3156 are each glycosylated (N-linked (GlcNAc...) asparagine). Positions 3180-3359 (EHAARFDGDA…AIDGKNVKPC (180 aa)) constitute a Laminin G-like 3 domain.

As to quaternary structure, component of an integrin containing attachment complex, composed of at least pat-2, pat-3, pat-4, pat-6, unc-52, unc-97 and unc-112. Detected on embryonic and adult body wall muscle cells (at protein level). Found in the basement membrane of all contractile tissues (at protein level). Expressed in gonadal sheath cells and spermatheca.

Its subcellular location is the secreted. It localises to the extracellular space. It is found in the extracellular matrix. The protein localises to the basement membrane. The protein resides in the cytoplasm. Its subcellular location is the myofibril. It localises to the sarcomere. It is found in the m line. Component of an integrin containing attachment complex, which is required for muscle development and maintenance. Probable structural role in myofilament assembly and/or attachment of the myofilament lattice to the cell membrane. May be an extracellular anchor for integrin receptors in body wall muscles and myoepithelial sheath cells. During the formation of neuromuscular junctions at the larval stage, negatively regulates membrane protrusion from body wall muscles, probably downstream of the integrin complex formed by pat-2 and pat-3. Involved in ovulation. Required for normal lifespan. This chain is Basement membrane proteoglycan, found in Caenorhabditis elegans.